A 218-amino-acid polypeptide reads, in one-letter code: Small ribosomal subunit protein uS3c (218 aa).

The KH type-2 domain maps to 47 to 118 (VQKNIRISSG…KLNIAITRIS (72 aa)).

The protein belongs to the universal ribosomal protein uS3 family. Part of the 30S ribosomal subunit.

The protein resides in the plastid. It is found in the chloroplast. In Aethionema cordifolium (Lebanon stonecress), this protein is Small ribosomal subunit protein uS3c (rps3).